The following is a 435-amino-acid chain: Methylenetetrahydrofolate--tRNA-(uracil-5-)-methyltransferase TrmFO (435 aa).

10–15 (GAGLAG) lines the FAD pocket.

Belongs to the MnmG family. TrmFO subfamily. The cofactor is FAD.

Its subcellular location is the cytoplasm. The enzyme catalyses uridine(54) in tRNA + (6R)-5,10-methylene-5,6,7,8-tetrahydrofolate + NADH + H(+) = 5-methyluridine(54) in tRNA + (6S)-5,6,7,8-tetrahydrofolate + NAD(+). The catalysed reaction is uridine(54) in tRNA + (6R)-5,10-methylene-5,6,7,8-tetrahydrofolate + NADPH + H(+) = 5-methyluridine(54) in tRNA + (6S)-5,6,7,8-tetrahydrofolate + NADP(+). Its function is as follows. Catalyzes the folate-dependent formation of 5-methyl-uridine at position 54 (M-5-U54) in all tRNAs. The sequence is that of Methylenetetrahydrofolate--tRNA-(uracil-5-)-methyltransferase TrmFO from Halalkalibacterium halodurans (strain ATCC BAA-125 / DSM 18197 / FERM 7344 / JCM 9153 / C-125) (Bacillus halodurans).